We begin with the raw amino-acid sequence, 673 residues long: DNA ligase (673 aa).

Residues 38–42, 87–88, and glutamate 119 contribute to the NAD(+) site; these read DSVYD and SL. Lysine 121 functions as the N6-AMP-lysine intermediate in the catalytic mechanism. Residues arginine 142, glutamate 179, lysine 296, and lysine 320 each contribute to the NAD(+) site. The Zn(2+) site is built by cysteine 414, cysteine 417, cysteine 432, and cysteine 438. The BRCT domain occupies 595-673; the sequence is VVKSEIAGKT…EEAFLKLLKS (79 aa).

The protein belongs to the NAD-dependent DNA ligase family. LigA subfamily. Requires Mg(2+) as cofactor. Mn(2+) is required as a cofactor.

It catalyses the reaction NAD(+) + (deoxyribonucleotide)n-3'-hydroxyl + 5'-phospho-(deoxyribonucleotide)m = (deoxyribonucleotide)n+m + AMP + beta-nicotinamide D-nucleotide.. In terms of biological role, DNA ligase that catalyzes the formation of phosphodiester linkages between 5'-phosphoryl and 3'-hydroxyl groups in double-stranded DNA using NAD as a coenzyme and as the energy source for the reaction. It is essential for DNA replication and repair of damaged DNA. In Coxiella burnetii (strain CbuK_Q154) (Coxiella burnetii (strain Q154)), this protein is DNA ligase.